A 215-amino-acid chain; its full sequence is Large ribosomal subunit protein uL4 (215 aa).

The interval 46-72 (TAKSKNRAEVSGGGRKPWAQKGGGRAR) is disordered. The segment covering 56-71 (SGGGRKPWAQKGGGRA) has biased composition (gly residues).

The protein belongs to the universal ribosomal protein uL4 family. As to quaternary structure, part of the 50S ribosomal subunit.

Functionally, one of the primary rRNA binding proteins, this protein initially binds near the 5'-end of the 23S rRNA. It is important during the early stages of 50S assembly. It makes multiple contacts with different domains of the 23S rRNA in the assembled 50S subunit and ribosome. In terms of biological role, forms part of the polypeptide exit tunnel. The sequence is that of Large ribosomal subunit protein uL4 from Helicobacter pylori (strain Shi470).